The following is a 359-amino-acid chain: NADH-quinone oxidoreductase subunit H (359 aa).

A run of 8 helical transmembrane segments spans residues 19 to 39 (IGWF…FIAL), 94 to 114 (FLFV…FAVL), 127 to 147 (VGLF…LAAG), 166 to 186 (IVSY…LAGT), 202 to 222 (FMHW…IYFI), 266 to 286 (MFMV…SPLP), 301 to 321 (VWGA…QMWL), and 337 to 357 (CWKV…IWVI).

The protein belongs to the complex I subunit 1 family. NDH-1 is composed of 14 different subunits. Subunits NuoA, H, J, K, L, M, N constitute the membrane sector of the complex.

It is found in the cell inner membrane. It carries out the reaction a quinone + NADH + 5 H(+)(in) = a quinol + NAD(+) + 4 H(+)(out). Its function is as follows. NDH-1 shuttles electrons from NADH, via FMN and iron-sulfur (Fe-S) centers, to quinones in the respiratory chain. The immediate electron acceptor for the enzyme in this species is believed to be ubiquinone. Couples the redox reaction to proton translocation (for every two electrons transferred, four hydrogen ions are translocated across the cytoplasmic membrane), and thus conserves the redox energy in a proton gradient. This subunit may bind ubiquinone. This Chlorobaculum parvum (strain DSM 263 / NCIMB 8327) (Chlorobium vibrioforme subsp. thiosulfatophilum) protein is NADH-quinone oxidoreductase subunit H.